We begin with the raw amino-acid sequence, 448 residues long: MTAYEMNFDGLVGPTHNYGGLSYGNVASQSNSQAISNPKEAAKQGLAKMKALMDMGFKQGVLAPQERPDVAALRRLGFTGSDPEVIARAAREAMPLLVASCSASSMWTANACTVSPSADTADARVHFTAANLNCKFHRSIEHPTTSRVLQAMFASQEHFAHHPALPAVSQFGDEGAANHTRFCKSYGEPGVEFFVYGRSAFDSRYPAPARYPARQTLEASQAVARLHGLSEEGVVYAQQNPAVIDQGVFHNDVIAVGNGEVLFYHQDAFLDTDKVLGELGSKLAGRGGNFQAVCVPNSAVSVEDAVKSYLFNSQLLTRADGSMLLVVPEECRNNASVWRYLEQLTAGNGPIREVRVFDLKQSMQNGGGPACLRLRVALKEQELAAVNPGVVMSLELHDRLVAWVDKHYRDRLSEADLADPQLLIECRTALDELTQILKLGSVYPFQMT.

Substrate contacts are provided by residues 19–28, asparagine 110, and 137–138; these read GGLSYGNVAS and HR. The active site involves glutamate 174. Position 214 (arginine 214) interacts with substrate. Residue histidine 250 is part of the active site. Residues aspartate 252 and asparagine 365 each contribute to the substrate site. Cysteine 371 serves as the catalytic Nucleophile.

This sequence belongs to the succinylarginine dihydrolase family. As to quaternary structure, homodimer.

It catalyses the reaction N(2)-succinyl-L-arginine + 2 H2O + 2 H(+) = N(2)-succinyl-L-ornithine + 2 NH4(+) + CO2. Its pathway is amino-acid degradation; L-arginine degradation via AST pathway; L-glutamate and succinate from L-arginine: step 2/5. In terms of biological role, catalyzes the hydrolysis of N(2)-succinylarginine into N(2)-succinylornithine, ammonia and CO(2). The polypeptide is N-succinylarginine dihydrolase (Ectopseudomonas mendocina (strain ymp) (Pseudomonas mendocina)).